The sequence spans 343 residues: Probable 3',5'-cyclic-nucleotide phosphodiesterase (343 aa).

Positions 1–36 (MKYLSIKSASDKIKSGLLKTGVILSFSLFSSLSTAA) are cleaved as a signal peptide.

Belongs to the cyclic nucleotide phosphodiesterase class-II family.

The protein localises to the periplasm. The enzyme catalyses a nucleoside 3',5'-cyclic phosphate + H2O = a nucleoside 5'-phosphate + H(+). The chain is Probable 3',5'-cyclic-nucleotide phosphodiesterase (cpdP) from Yersinia pestis.